A 194-amino-acid chain; its full sequence is MAIGSKIIKPGGSDPDDFEKSIAQALVELEANSDLKPYLRDLHITRAREIEFGSKKAVIIYVPIPQQKVFQKIQIILVRELEKKFSGKHVVVIGERKILPKPTRKARNPLKQKRPRSRTLTAVYDAILEDLVFPAEIVGKRIRVKLDGSQLVKVHLDKNQQTTIEHKVDTFTSVYKKLTGRDVTFEFPDNYLNV.

The protein belongs to the eukaryotic ribosomal protein eS7 family.

The chain is Small ribosomal subunit protein eS7 (RpS7) from Drosophila yakuba (Fruit fly).